A 181-amino-acid chain; its full sequence is NADH-quinone oxidoreductase subunit B (181 aa).

Positions 60, 61, 125, and 155 each coordinate [4Fe-4S] cluster.

It belongs to the complex I 20 kDa subunit family. NDH-1 is composed of 14 different subunits. Subunits NuoB, C, D, E, F, and G constitute the peripheral sector of the complex. Requires [4Fe-4S] cluster as cofactor.

It localises to the cell inner membrane. It carries out the reaction a quinone + NADH + 5 H(+)(in) = a quinol + NAD(+) + 4 H(+)(out). Its function is as follows. NDH-1 shuttles electrons from NADH, via FMN and iron-sulfur (Fe-S) centers, to quinones in the respiratory chain. Couples the redox reaction to proton translocation (for every two electrons transferred, four hydrogen ions are translocated across the cytoplasmic membrane), and thus conserves the redox energy in a proton gradient. This chain is NADH-quinone oxidoreductase subunit B, found in Novosphingobium aromaticivorans (strain ATCC 700278 / DSM 12444 / CCUG 56034 / CIP 105152 / NBRC 16084 / F199).